Consider the following 404-residue polypeptide: Tryptophan synthase beta chain (404 aa).

An N6-(pyridoxal phosphate)lysine modification is found at K90.

The protein belongs to the TrpB family. As to quaternary structure, tetramer of two alpha and two beta chains. Pyridoxal 5'-phosphate serves as cofactor.

It catalyses the reaction (1S,2R)-1-C-(indol-3-yl)glycerol 3-phosphate + L-serine = D-glyceraldehyde 3-phosphate + L-tryptophan + H2O. It participates in amino-acid biosynthesis; L-tryptophan biosynthesis; L-tryptophan from chorismate: step 5/5. Its function is as follows. The beta subunit is responsible for the synthesis of L-tryptophan from indole and L-serine. The polypeptide is Tryptophan synthase beta chain (trpB) (Geobacillus stearothermophilus (Bacillus stearothermophilus)).